Reading from the N-terminus, the 108-residue chain is Small ribosomal subunit protein bS18 (108 aa).

The span at 1–12 (MSDITKQPANNI) shows a compositional bias: polar residues. The segment at 1-33 (MSDITKQPANNISSDDKKEVAKASAKSSVEGAK) is disordered.

It belongs to the bacterial ribosomal protein bS18 family. As to quaternary structure, part of the 30S ribosomal subunit. Forms a tight heterodimer with protein bS6.

Binds as a heterodimer with protein bS6 to the central domain of the 16S rRNA, where it helps stabilize the platform of the 30S subunit. This is Small ribosomal subunit protein bS18 from Mycoplasmoides gallisepticum (strain R(low / passage 15 / clone 2)) (Mycoplasma gallisepticum).